The chain runs to 341 residues: HTH-type transcriptional repressor PurR (341 aa).

Residues 2 to 56 enclose the HTH lacI-type domain; the sequence is ATIKDVAKRAGVSTTTVSHVINKTRFVAEETKAAVGAAIKELHYSPSAVARSLKV. The H-T-H motif DNA-binding region spans 4-23; sequence IKDVAKRAGVSTTTVSHVIN. Residues 48-56 mediate DNA binding; it reads SAVARSLKV. Positions 73, 190, 192, 221, and 275 each coordinate hypoxanthine.

Homodimer.

It functions in the pathway purine metabolism; purine nucleotide biosynthesis [regulation]. Its function is as follows. Is the main repressor of the genes involved in the de novo synthesis of purine nucleotides, regulating purB, purC, purEK, purF, purHD, purL, purMN and guaBA expression. PurR is allosterically activated to bind its cognate DNA by binding the purine corepressors, hypoxanthine or guanine, thereby effecting transcription repression. In Serratia proteamaculans (strain 568), this protein is HTH-type transcriptional repressor PurR.